Reading from the N-terminus, the 529-residue chain is Snake venom 5'-nucleotidase (529 aa).

Residue Gly-1 is a signal peptide. Residues Asp-12 and His-14 each contribute to the Zn(2+) site. Residues Cys-27 and Cys-32 are joined by a disulfide bond. Zn(2+) is bound by residues Asp-60, Asn-92, His-195, and His-218. N-linked (GlcNAc...) asparagine glycans are attached at residues Asn-308 and Asn-322. Cystine bridges form between Cys-328–Cys-333 and Cys-340–Cys-362. Arg-329 serves as a coordination point for AMP. AMP contacts are provided by Asn-365, Arg-370, and Phe-393. A disulfide bond links Cys-452 and Cys-455. 2 residues coordinate AMP: Phe-476 and Asp-482. Ser-525 is lipidated: GPI-anchor amidated serine. Residues 526–529 constitute a propeptide, removed in mature form; it reads AGSL.

Belongs to the 5'-nucleotidase family. Zn(2+) is required as a cofactor. Post-translationally, venom 5'-nucleotidases (or a part thereof) may be released into the venom via exosome-like vesicles. They may be attached via a GPI anchor to the membrane of these vesicles. Soluble forms of 5'-nucleotidase might be released by cleavage of the ectodomain in the exosome-like vesicles or venom gland cells. As to expression, expressed by the venom gland.

It localises to the membrane. The catalysed reaction is a ribonucleoside 5'-phosphate + H2O = a ribonucleoside + phosphate. Functionally, hydrolyzes nucleotides into nucleosides. Snake venom 5'-nucleotidases are widely distributed among venomous snake taxa, but there is a lack of information about their biological activities. They have been shown to inhibit platelet aggregation. This effect may be due to the liberation of inhibitory AMP or adenosine by its action on ADP released upon initiation of aggregation. Venom 5'-nucleotidases are also known to synergistically act in vivo with other toxins like ADPases, phospholipases, and disintegrins to exert a more pronounced anti-coagulant effect. This Naja atra (Chinese cobra) protein is Snake venom 5'-nucleotidase.